The following is a 405-amino-acid chain: Deoxyguanosinetriphosphate triphosphohydrolase-like protein (405 aa).

In terms of domain architecture, HD spans 75–219; it reads RLTHTIEVAQ…AAVADDIAYN (145 aa).

Belongs to the dGTPase family. Type 2 subfamily.

The sequence is that of Deoxyguanosinetriphosphate triphosphohydrolase-like protein from Allorhizobium ampelinum (strain ATCC BAA-846 / DSM 112012 / S4) (Agrobacterium vitis (strain S4)).